A 419-amino-acid polypeptide reads, in one-letter code: Transcription factor IIIB 50 kDa subunit (419 aa).

The TFIIB-type zinc finger occupies 2 to 36 (PGRGRCPDCGSTELVEDSHYSQSQLVCSDCGCVVT). Zn(2+) is bound by residues Cys-7, Cys-10, Cys-28, and Cys-31. A run of 2 repeats spans residues 72 to 157 (GLRR…MQIV) and 173 to 249 (VKTY…SLAR). The segment at 108-114 (AARLQKK) is interaction with target DNA. Over residues 314–326 (DGTAEVETREKEP) the composition is skewed to basic and acidic residues. A disordered region spans residues 314 to 351 (DGTAEVETREKEPPGWGQGQGEGEVGNNSLGLPQGKRP). Position 353 is a phosphoserine (Ser-353). Positions 357–363 (LLPPCML) are required for the formation of a ternary complex with DNA and TBP; not required for interaction with TBP in the absence of DNA. A Cysteine sulfenic acid (-SOH) modification is found at Cys-361. Residues 365–419 (SPKRICPVPPVSTVTGDENISDSEIEQYLRTPQEVRDFQRAQAARQAATSVPNPP) are required for interaction with TBP and formation of a ternary complex with DNA and TBP.

It belongs to the TFIIB family. Component of TFIIIB complexes. The TFIIIB complex has two activities, alpha and beta. The TFIIIB-alpha activity complex is composed of TBP, BDP1, and a complex containing both BRF2 and at least four stably associated proteins; this complex inhibits the transcription by pol III via its phosphorylation by CK2; YY1 facilitates the TFIIIB-alpha complex formation. Interacts with TBP; this interaction promotes recruitment of BRF2 to TATA box-containing promoters. Interacts with TBP and the BURE sequence (GC-rich sequence downstream from the TATA box) to form a strong ternary complex which is joined by BDP1; this ternary complex stimulates pol III transcription. Forms a trimeric complex composed of TBP, BRF2 and mini-SNAPc complex (SNAP43, SNAP50, and the N-terminal third of SNAP190) on the promoter. Assembly of the TBP-BRF2 complex is stimulated by SNAP190. Interacts with MAF1 and SNAPC4. In terms of processing, in response to oxidative stress, Cys-361 is reversibly oxidized to cysteine sulfenic acid. Oxidation of Cys-361 impairs formation of a ternary complex with TBP and DNA and down-regulates expression of target genes in response to oxidative stress.

Its subcellular location is the nucleus. In terms of biological role, general activator of RNA polymerase III transcription. Factor exclusively required for RNA polymerase III transcription of genes with promoter elements upstream of the initiation sites. Contributes to the regulation of gene expression; functions as activator in the absence of oxidative stress. Down-regulates expression of target genes in response to oxidative stress. Overexpression protects cells against apoptosis in response to oxidative stress. The sequence is that of Transcription factor IIIB 50 kDa subunit (BRF2) from Homo sapiens (Human).